The sequence spans 319 residues: Tetrahydromethanopterin S-methyltransferase subunit H (319 aa).

The protein belongs to the MtrH family. In terms of assembly, the complex is composed of 8 subunits; MtrA, MtrB, MtrC, MtrD, MtrE, MtrF, MtrG and MtrH.

The catalysed reaction is 5-methyl-5,6,7,8-tetrahydromethanopterin + coenzyme M + 2 Na(+)(in) = 5,6,7,8-tetrahydromethanopterin + methyl-coenzyme M + 2 Na(+)(out). It participates in one-carbon metabolism; methanogenesis from CO(2); methyl-coenzyme M from 5,10-methylene-5,6,7,8-tetrahydromethanopterin: step 2/2. Functionally, part of a complex that catalyzes the formation of methyl-coenzyme M and tetrahydromethanopterin from coenzyme M and methyl-tetrahydromethanopterin. This is an energy-conserving, sodium-ion translocating step. MtrH catalyzes the transfer of the methyl group from methyl-tetrahydromethanopterin to the corrinoid prosthetic group of MtrA. This chain is Tetrahydromethanopterin S-methyltransferase subunit H, found in Methanococcus maripaludis (strain C5 / ATCC BAA-1333).